Consider the following 453-residue polypeptide: uncharacterized protein (453 aa).

Positions 5–63 constitute a TRAM domain; sequence LLKKNQSVELTIEDLTHDGSGVGKIDGYPLFIPNALPGEKITAKITKLNKNYGFARMEN. [4Fe-4S] cluster contacts are provided by C76, C82, C85, and C162. Residues Q285, Y314, E335, and D383 each coordinate S-adenosyl-L-methionine. Catalysis depends on C410, which acts as the Nucleophile.

This sequence belongs to the class I-like SAM-binding methyltransferase superfamily. RNA M5U methyltransferase family.

This is an uncharacterized protein from Listeria innocua serovar 6a (strain ATCC BAA-680 / CLIP 11262).